Consider the following 348-residue polypeptide: D-amino-acid oxidase (348 aa).

FAD-binding residues include Ala15, Ile18, Lys40, Ser52, Gly56, and Asn58. Residues Tyr232 and Arg295 each coordinate (R)-lactate. 2 residues coordinate anthranilate: Tyr232 and Arg295. FAD contacts are provided by Arg295, Ser323, Gly326, Tyr327, and Gln328.

It belongs to the DAMOX/DASOX family. FAD serves as cofactor.

Its subcellular location is the peroxisome. The enzyme catalyses a D-alpha-amino acid + O2 + H2O = a 2-oxocarboxylate + H2O2 + NH4(+). It carries out the reaction D-serine + O2 + H2O = 3-hydroxypyruvate + H2O2 + NH4(+). The catalysed reaction is D-alanine + O2 + H2O = pyruvate + H2O2 + NH4(+). It catalyses the reaction D-arginine + O2 + H2O = 5-guanidino-2-oxopentanoate + H2O2 + NH4(+). Functionally, catalyzes the oxidative deamination of D-amino acids with broad substrate specificity. Enables the organism to utilize D-amino acids as a source of nutrients. This is D-amino-acid oxidase from Schizosaccharomyces pombe (strain 972 / ATCC 24843) (Fission yeast).